A 488-amino-acid polypeptide reads, in one-letter code: Ribulose bisphosphate carboxylase large chain 2 (488 aa).

Residues N128 and T178 each coordinate substrate. Catalysis depends on K180, which acts as the Proton acceptor. Substrate is bound at residue K182. K206, D208, and E209 together coordinate Mg(2+). The residue at position 206 (K206) is an N6-carboxylysine. H298 acts as the Proton acceptor in catalysis. The substrate site is built by R299, H331, and S383.

The protein belongs to the RuBisCO large chain family. Type I subfamily. Heterohexadecamer of 8 large chains and 8 small chains. The cofactor is Mg(2+).

It carries out the reaction 2 (2R)-3-phosphoglycerate + 2 H(+) = D-ribulose 1,5-bisphosphate + CO2 + H2O. The catalysed reaction is D-ribulose 1,5-bisphosphate + O2 = 2-phosphoglycolate + (2R)-3-phosphoglycerate + 2 H(+). Its function is as follows. RuBisCO catalyzes two reactions: the carboxylation of D-ribulose 1,5-bisphosphate, the primary event in carbon dioxide fixation, as well as the oxidative fragmentation of the pentose substrate. Both reactions occur simultaneously and in competition at the same active site. The sequence is that of Ribulose bisphosphate carboxylase large chain 2 from Nitrobacter hamburgensis (strain DSM 10229 / NCIMB 13809 / X14).